Consider the following 245-residue polypeptide: Ribosomal RNA large subunit methyltransferase E (245 aa).

G83, W85, D111, D127, and D156 together coordinate S-adenosyl-L-methionine. K196 serves as the catalytic Proton acceptor.

The protein belongs to the class I-like SAM-binding methyltransferase superfamily. RNA methyltransferase RlmE family.

It is found in the cytoplasm. The catalysed reaction is uridine(2552) in 23S rRNA + S-adenosyl-L-methionine = 2'-O-methyluridine(2552) in 23S rRNA + S-adenosyl-L-homocysteine + H(+). Its function is as follows. Specifically methylates the uridine in position 2552 of 23S rRNA at the 2'-O position of the ribose in the fully assembled 50S ribosomal subunit. This is Ribosomal RNA large subunit methyltransferase E from Polaromonas naphthalenivorans (strain CJ2).